We begin with the raw amino-acid sequence, 434 residues long: ATP-dependent RNA helicase uap56 (434 aa).

Positions 1 to 43 are disordered; the sequence is MASAQEDLIDYEEEEELVQDQPAQEITPAADTAENGEKSDKKG. A compositionally biased stretch (acidic residues) spans 7–18; it reads DLIDYEEEEELV. The Q motif signature appears at 51 to 79; sequence TGFRDFLLKPELLRAITDSGFEHPSEVQQ. The region spanning 82 to 257 is the Helicase ATP-binding domain; that stretch reads IPQSILGTDV…KKFMQNPLEI (176 aa). 95–102 is a binding site for ATP; sequence AKSGMGKT. The DECD box signature appears at 204–207; it reads DECD. The Helicase C-terminal domain occupies 269-430; it reads GLQQHYVKLE…ELPDEIDVGS (162 aa).

The protein belongs to the DEAD box helicase family. DECD subfamily. Interacts with mlo3 and rae1.

It localises to the nucleus. The enzyme catalyses ATP + H2O = ADP + phosphate + H(+). In terms of biological role, ATP-binding RNA helicase involved in transcription elongation and required for the export of mRNA out of the nucleus. SUB2 also plays a role in pre-mRNA splicing and spliceosome assembly. May be involved in rDNA and telomeric silencing, and maintenance of genome integrity. Links the mRNA adapter mlo3 to rae1 for targeting mRNA-protein complex to the proteins of the nucleoporin complex (NPC). This Schizosaccharomyces pombe (strain 972 / ATCC 24843) (Fission yeast) protein is ATP-dependent RNA helicase uap56 (uap56).